The following is a 712-amino-acid chain: MTSAEKSATRNIYDPSALPDYDTQFIKPDELHQFEKALNAPAAAPLVAINDWRPINQRVRKNRRTKPRRSKDETREGVLYTVLKWPFLFIVFAWITVLGIAYALTRLYIFLYEQCVTWRGKRERLRRELSVQTNYRDWLTAAQALDTHLGNQKWKETDEYAYYDHLTINKVVAQLKQARKAAESEVHNGRSGVSDLPAVEDLCALLEACVKNNFAGVENPRLYSESYSGTKDLVQEYIDEVQACMQLILDSKQIPAEEKYQHFKHLDTNFGRTALCLSGGATFAYYHFGVIRALLDNDVLPEIITGTSGGALVAALVATRTDEELKQLLVPALAYRIRACHEGFTTWVWRWWRTGARFDTVDWARQCSWFCRGSTTFREAYERTGRILNVSCVPSDPHSPTILANYLTSPDCVIWSAVLASAAVPGILNPVVLMTKKRDGTLAPYSFGHKWKDGSLRTDIPIKALNLHFNVNFTIVSQVNPHINLFFFSSRGTVGRPVTHRKGRGWRGGFLGSAIEQYIKLDMNKWLRVLRHLELLPRPLGQDWSEIWLQKFSGTITIWPKSIPSDFYHILSDPSPERLARMLHVGKQSAFPKIQFIKNRLKIENTIMQGLQQSSPGGDRVLLPILSRRLQNRAQEHADAMVERLDHSFPERHSDYKDESHYTEVSDSLSTNSSRPHTPDARRGSIFEEMRRQSAVFFDDPDMYGDEDAIAT.

Over residues 1–10 the composition is skewed to polar residues; the sequence is MTSAEKSATR. Residues 1–20 are disordered; that stretch reads MTSAEKSATRNIYDPSALPD. The helical transmembrane segment at 85 to 105 threads the bilayer; that stretch reads WPFLFIVFAWITVLGIAYALT. Positions 275–466 constitute a PNPLA domain; sequence LCLSGGATFA…RTDIPIKALN (192 aa). Residues 306–310 carry the GXSXG motif; it reads GTSGG. Serine 308 serves as the catalytic Nucleophile. Aspartate 453 acts as the Proton acceptor in catalysis. Over residues 649 to 664 the composition is skewed to basic and acidic residues; sequence FPERHSDYKDESHYTE. The interval 649-686 is disordered; sequence FPERHSDYKDESHYTEVSDSLSTNSSRPHTPDARRGSI. Residues 665–676 show a composition bias toward polar residues; the sequence is VSDSLSTNSSRP. A compositionally biased stretch (basic and acidic residues) spans 677-686; the sequence is HTPDARRGSI.

It belongs to the PLPL family.

The protein localises to the membrane. Its function is as follows. Probable lipid hydrolase. The sequence is that of Patatin-like phospholipase domain-containing protein ACLA_029670 from Aspergillus clavatus (strain ATCC 1007 / CBS 513.65 / DSM 816 / NCTC 3887 / NRRL 1 / QM 1276 / 107).